We begin with the raw amino-acid sequence, 82 residues long: Delta-conotoxin-like SmVIA (82 aa).

The first 22 residues, 1–22 (MKLTCVMIVAVLFLIAWTFVTA), serve as a signal peptide directing secretion. The propeptide occupies 23 to 49 (DDSRNGLKNLFPKARHEMKNPEASKLN). 3 disulfide bridges follow: Cys-54–Cys-69, Cys-61–Cys-73, and Cys-68–Cys-77. Pro-65 is modified (4-hydroxyproline).

Belongs to the conotoxin O1 superfamily. In terms of tissue distribution, expressed by the venom duct.

The protein resides in the secreted. Its function is as follows. Delta-conotoxins bind to site 6 of voltage-gated sodium channels (Nav) and inhibit the inactivation process. The polypeptide is Delta-conotoxin-like SmVIA (Conus stercusmuscarum (Fly-specked cone)).